The following is a 605-amino-acid chain: Acetoin dehydrogenase operon transcriptional activator AcoR (605 aa).

The 226-residue stretch at 295 to 520 (VIGQSGRSQA…LFNVFERLSI (226 aa)) folds into the Sigma-54 factor interaction domain. ATP is bound by residues 323–330 (GETGTGKE) and 387–396 (ANQGTLFLDE). The H-T-H motif DNA-binding region spans 578-597 (VSQAAKISGIPRSTFYKRLK).

Its function is as follows. Acts as a transcriptional activator of the acoABCL operon encoding the acetoin dehydrogenase complex. This is Acetoin dehydrogenase operon transcriptional activator AcoR (acoR) from Bacillus subtilis (strain 168).